The primary structure comprises 602 residues: MRSMRALQNALSRAGSHGQRGGWGHPSRGPLLGGGVRYYFGEAAAQGRGTPHSHQPQHSDHDASNSGMLPRLGDLLFYTIAEGQERIPIHKFTTALKATGLQTSDPRLQDCMSKMQRMVQESSSGGLLDRELFQKCVSSNIVLLTQAFRKKFVIPDFEEFTGHVDRIFEDAKELTGGKVAAYIPHLAKSNPDLWGVSLCTVDGQRHSVGHTKIPFCLQSCVKPLTYAISVSTLGTDYVHKFVGKEPSGLRYNKLSLNEEGIPHNPMVNAGAIVVSSLIKMDCNKAEKFDFVLQYLNKMAGNEFMGFSNATFQSEKETGDRNYAIGYYLKEKKCFPKGVDMMAALDLYFQLCSVEVTCESGSVMAATLANGGICPITGESVLSAEAVRNTLSLMHSCGMYDFSGQFAFHVGLPAKSAVSGAILLVVPNVMGMMCLSPPLDKLGNSHRGISFCQKLVSLFNFHNYDNLRHCARKLDPRREGGEVRNKTVVNLLFAAYSGDVSALRRFALSAVDMEQKDYDSRTALHVAAAEGHIDVVKFLIEACKVNPFVKDRWGNIPLDDAVQFNHLEVVKLLQDYHDSYMLSETQAEVAAETLSKENLESMV.

A mitochondrion-targeting transit peptide spans 1–14 (MRSMRALQNALSRA). Disordered stretches follow at residues 1-28 (MRSM…HPSR) and 46-67 (QGRG…SNSG). A substrate-binding site is contributed by S219. K253 is modified (N6-succinyllysine). Residue N268 participates in substrate binding. 2 positions are modified to N6-acetyllysine: K279 and K284. Residues E314 and N321 each coordinate substrate. K329 carries the post-translational modification N6-acetyllysine. Substrate-binding residues include Y347, Y399, and V417. 2 ANK repeats span residues 518–551 (DSRT…VKDR) and 552–585 (WGNI…SETQ).

The protein belongs to the glutaminase family. As to quaternary structure, homotetramer, dimer of dimers. Does not assemble into higher oligomers. Interacts with the PDZ domain of the syntrophin SNTA1. Interacts with the PDZ domain of TAX1BP3. As to expression, liver specific.

Its subcellular location is the mitochondrion. The catalysed reaction is L-glutamine + H2O = L-glutamate + NH4(+). Plays an important role in the regulation of glutamine catabolism. Promotes mitochondrial respiration and increases ATP generation in cells by catalyzing the synthesis of glutamate and alpha-ketoglutarate. Increases cellular anti-oxidant function via NADH and glutathione production. May play a role in preventing tumor proliferation. The protein is Glutaminase liver isoform, mitochondrial (Gls2) of Rattus norvegicus (Rat).